Reading from the N-terminus, the 176-residue chain is Ribosome rescue factor SmrB (176 aa).

A Smr domain is found at 93–168 (LDLHGYRQSE…GDAALLVLID (76 aa)).

This sequence belongs to the SmrB family. In terms of assembly, associates with collided ribosomes, but not with correctly translating polysomes.

Its function is as follows. Acts as a ribosome collision sensor. Detects stalled/collided disomes (pairs of ribosomes where the leading ribosome is stalled and a second ribosome has collided with it) and endonucleolytically cleaves mRNA at the 5' boundary of the stalled ribosome. Stalled/collided disomes form a new interface (primarily via the 30S subunits) that binds SmrB. Cleaved mRNA becomes available for tmRNA ligation, leading to ribosomal subunit dissociation and rescue of stalled ribosomes. This chain is Ribosome rescue factor SmrB, found in Shewanella oneidensis (strain ATCC 700550 / JCM 31522 / CIP 106686 / LMG 19005 / NCIMB 14063 / MR-1).